The primary structure comprises 184 residues: Putative lyase MJ0807 (184 aa).

This sequence belongs to the chorismate pyruvate-lyase type 2 family.

This chain is Putative lyase MJ0807, found in Methanocaldococcus jannaschii (strain ATCC 43067 / DSM 2661 / JAL-1 / JCM 10045 / NBRC 100440) (Methanococcus jannaschii).